The primary structure comprises 140 residues: Small ribosomal subunit protein uS12 (140 aa).

The disordered stretch occupies residues 33 to 55 (KEQTNVSSPQKRGVCTRVGTMTP).

Belongs to the universal ribosomal protein uS12 family. In terms of assembly, part of the 30S ribosomal subunit. Contacts proteins S8 and S17. May interact with IF1 in the 30S initiation complex.

Its function is as follows. With S4 and S5 plays an important role in translational accuracy. Interacts with and stabilizes bases of the 16S rRNA that are involved in tRNA selection in the A site and with the mRNA backbone. Located at the interface of the 30S and 50S subunits, it traverses the body of the 30S subunit contacting proteins on the other side and probably holding the rRNA structure together. The combined cluster of proteins S8, S12 and S17 appears to hold together the shoulder and platform of the 30S subunit. The sequence is that of Small ribosomal subunit protein uS12 from Geobacillus kaustophilus (strain HTA426).